A 179-amino-acid polypeptide reads, in one-letter code: Peptidyl-prolyl cis-trans isomerase A (179 aa).

The PPIase cyclophilin-type domain occupies 15–178; that stretch reads FFDITIGGVE…KPVVIANCGQ (164 aa).

The protein belongs to the cyclophilin-type PPIase family.

It is found in the cytoplasm. It localises to the cytosol. The catalysed reaction is [protein]-peptidylproline (omega=180) = [protein]-peptidylproline (omega=0). With respect to regulation, binds cyclosporin A (CsA). CsA mediates some of its effects via an inhibitory action on PPIase. Functionally, PPIase that catalyzes the cis-trans isomerization of proline imidic peptide bonds in oligopeptides and may therefore assist protein folding. This chain is Peptidyl-prolyl cis-trans isomerase A (ppiA), found in Dictyostelium discoideum (Social amoeba).